The primary structure comprises 395 residues: MLLERVRAGSEKAAELCPFPRSPEIPLCAGCNQHIVDRFILKVLDRHWHSKCLKCSDCQTQLAEKCFSRGDGVYCKEDFFKRFGTKCAACQQGIPPTQVVRRAQDFVYHLHCFACIVCKRQLATGDEFYLMEDSRLVCKADYETAKQREAESTAKRPRTTITAKQLETLKNAYNNSPKPARHVREQLSSETGLDMRVVQVWFQNRRAKEKRLKKDAGRQRWGQYFRNMKRSRGTSKSDKDSIQEEGPDSDAEVSFTDEPSMSEMSHSNGIYSNLSEASPALGRQAGTNGGFSLDHSGIPAQDQYHDLRSNSPYGIPQSPASLQALPGHQPLISSLVYPDSGLGIMGQGGQGVPQSMRVLAGNGPSSDLSTGSSGGYPDFPASPASWLDEVDHAQF.

2 LIM zinc-binding domains span residues 28–78 and 87–141; these read CAGC…CKED and CAAC…CKAD. Positions 154–213 form a DNA-binding region, homeobox; the sequence is AKRPRTTITAKQLETLKNAYNNSPKPARHVREQLSSETGLDMRVVQVWFQNRRAKEKRLK. Disordered regions lie at residues 209–325 and 348–395; these read EKRL…LQAL and GGQG…HAQF. Residues 257–276 are compositionally biased toward polar residues; that stretch reads DEPSMSEMSHSNGIYSNLSE.

It is found in the nucleus. Its function is as follows. Transcription factor. Defines subclasses of motoneurons that segregate into columns in the spinal cord and select distinct axon pathways. Acts in conjunction with LIM-1, ISL-1 and ISL-2. This is LIM/homeobox protein Lhx3 (LHX3) from Gallus gallus (Chicken).